The sequence spans 345 residues: MKENITVAMLAELVDGEVIGDGEVLVGNFVSLETAGEGDITFLVKAGDQDLLTSTKAGAVIVHRKVEVESPATLIKVDDAYLAAAKIHTFLLEDEFSPEGIHRSAFVGEGCQISSEVTIKALVSIGNRVVIGPRTRIESGVAIGDDVTIGEDCLLKANVTIADGSQLGNGVTIHSGTVIGSDGYGYATDKMGFHYKRPQVGTVRVDDNVEIGANSCVDRATYGLTWIKSGAKIDNLVQIAHNVVVGENSLIVSQVGISGSTSLGRNVVMGGKAAAVGHLQIGDGVMIAGGSGVLSNLSAGAVVGGIPARPIKQWRKSVVLTTKLPEMQKDIRALKKSVEELAGKN.

The active-site Proton acceptor is His241.

The protein belongs to the transferase hexapeptide repeat family. LpxD subfamily. In terms of assembly, homotrimer.

The catalysed reaction is a UDP-3-O-[(3R)-3-hydroxyacyl]-alpha-D-glucosamine + a (3R)-hydroxyacyl-[ACP] = a UDP-2-N,3-O-bis[(3R)-3-hydroxyacyl]-alpha-D-glucosamine + holo-[ACP] + H(+). The protein operates within bacterial outer membrane biogenesis; LPS lipid A biosynthesis. Its function is as follows. Catalyzes the N-acylation of UDP-3-O-acylglucosamine using 3-hydroxyacyl-ACP as the acyl donor. Is involved in the biosynthesis of lipid A, a phosphorylated glycolipid that anchors the lipopolysaccharide to the outer membrane of the cell. The protein is UDP-3-O-acylglucosamine N-acyltransferase of Desulfotalea psychrophila (strain LSv54 / DSM 12343).